Here is a 721-residue protein sequence, read N- to C-terminus: Homeobox-leucine zipper protein HDG2 (721 aa).

The tract at residues 17-70 (NNHNYNHEDNNNEGFLRDDEFDSPNTKSGSENQEGGSGNDQDPLHPNKKKRYHR) is disordered. A compositionally biased stretch (basic and acidic residues) spans 21-34 (YNHEDNNNEGFLRD). Residues 64–123 (KKKRYHRHTQLQIQEMEAFFKECPHPDDKQRKQLSRELNLEPLQVKFWFQNKRTQMKNHH) constitute a DNA-binding region (homeobox). A coiled-coil region spans residues 120–194 (KNHHERHENS…DRISAIAAKY (75 aa)). The START domain maps to 242 to 468 (TESDKPVIID…LDRQCERLAS (227 aa)).

It belongs to the HD-ZIP homeobox family. Class IV subfamily. In terms of assembly, interacts with AIL7/PLT7, ANT, BBM and AIL1. In terms of tissue distribution, expressed in hairless cell files of the hypocotyl epidermis. Expressed in shoot apical meristem (SAM) with higher levels in L1 cells and the epidermal layer of young leaves. Expressed in primary root tips, in the L1 of apical inflorescence meristems, early flower primordia, carpel epidermis, ovule primordia, nucellus, chalaze and seed coat.

Its subcellular location is the nucleus. Probable transcription factor. Involved, together with PDF2, in the regulation of flower organs development by promoting the expression of APETALA 3 (AP3) in the epidermis and internal cell layers of developing flowers. The chain is Homeobox-leucine zipper protein HDG2 from Arabidopsis thaliana (Mouse-ear cress).